A 313-amino-acid chain; its full sequence is Formimidoylglutamase (313 aa).

Residues H130, D155, H157, D159, D241, and D243 each contribute to the Mn(2+) site.

It belongs to the arginase family. Mn(2+) is required as a cofactor.

It catalyses the reaction N-formimidoyl-L-glutamate + H2O = formamide + L-glutamate. It functions in the pathway amino-acid degradation; L-histidine degradation into L-glutamate; L-glutamate from N-formimidoyl-L-glutamate (hydrolase route): step 1/1. Its function is as follows. Catalyzes the conversion of N-formimidoyl-L-glutamate to L-glutamate and formamide. This is Formimidoylglutamase from Salmonella paratyphi B (strain ATCC BAA-1250 / SPB7).